Here is a 78-residue protein sequence, read N- to C-terminus: Large ribosomal subunit protein uL30 (78 aa).

Acidic residues predominate over residues 58–68 (DDTSPDAETGA). The disordered stretch occupies residues 58–78 (DDTSPDAETGADLERDGGNRS). Over residues 69-78 (DLERDGGNRS) the composition is skewed to basic and acidic residues.

It belongs to the universal ribosomal protein uL30 family. Part of the 50S ribosomal subunit.

The protein is Large ribosomal subunit protein uL30 of Roseiflexus sp. (strain RS-1).